A 243-amino-acid chain; its full sequence is Orotidine 5'-phosphate decarboxylase (243 aa).

Residues Asp-19, Lys-41, 69–78, Thr-124, Arg-185, Gln-194, Gly-214, and Arg-215 contribute to the substrate site; that span reads DLKFFDIPAT. The active-site Proton donor is the Lys-71.

The protein belongs to the OMP decarboxylase family. Type 1 subfamily. As to quaternary structure, homodimer.

It carries out the reaction orotidine 5'-phosphate + H(+) = UMP + CO2. It participates in pyrimidine metabolism; UMP biosynthesis via de novo pathway; UMP from orotate: step 2/2. In terms of biological role, catalyzes the decarboxylation of orotidine 5'-monophosphate (OMP) to uridine 5'-monophosphate (UMP). This is Orotidine 5'-phosphate decarboxylase from Xanthomonas campestris pv. campestris (strain B100).